Reading from the N-terminus, the 266-residue chain is Putative carbamate hydrolase RutD (266 aa).

The AB hydrolase-1 domain occupies Pro-14–Leu-115.

The protein belongs to the AB hydrolase superfamily. Hydrolase RutD family.

It catalyses the reaction carbamate + 2 H(+) = NH4(+) + CO2. Its function is as follows. Involved in pyrimidine catabolism. May facilitate the hydrolysis of carbamate, a reaction that can also occur spontaneously. This is Putative carbamate hydrolase RutD from Escherichia coli O9:H4 (strain HS).